The primary structure comprises 455 residues: Exodeoxyribonuclease 7 large subunit (455 aa).

The protein belongs to the XseA family. As to quaternary structure, heterooligomer composed of large and small subunits.

The protein localises to the cytoplasm. It carries out the reaction Exonucleolytic cleavage in either 5'- to 3'- or 3'- to 5'-direction to yield nucleoside 5'-phosphates.. Functionally, bidirectionally degrades single-stranded DNA into large acid-insoluble oligonucleotides, which are then degraded further into small acid-soluble oligonucleotides. The chain is Exodeoxyribonuclease 7 large subunit from Oceanobacillus iheyensis (strain DSM 14371 / CIP 107618 / JCM 11309 / KCTC 3954 / HTE831).